A 144-amino-acid polypeptide reads, in one-letter code: Heme transporter hrg1-B (144 aa).

Helical transmembrane passes span 6-26 (IYIS…AFIV), 38-58 (AMGG…IMYI), 71-91 (FFMF…ATFI), and 107-127 (FYLS…LGLY). Residues 140-141 (IL) carry the Di-leucine motif motif.

The protein belongs to the HRG family.

Its subcellular location is the endosome membrane. It is found in the lysosome membrane. It localises to the cytoplasmic vesicle. The protein resides in the phagosome membrane. The catalysed reaction is heme b(in) = heme b(out). Its function is as follows. Heme transporter that regulates intracellular heme availability through the endosomal or lysosomal compartment. In macrophages, is the heme transporter for heme-iron recycling. Essential for macrophage iron homeostasis, transports heme from the phagolysosome to the cytoplasm during erythrophagocytosis (EP). This is Heme transporter hrg1-B (slc48a1a) from Danio rerio (Zebrafish).